The following is a 129-amino-acid chain: MKSVQFCFLFCCWRATCCRSCELTNITITVEKEECSFCISINTTWCAGYCYTRDLVYRDPARPNIQKTCTFKELVYETVRVPGCAHRADSLHTYPVATACHCGKCDSGSTDCTVRGLGPSYCSFSDIRE.

The N-terminal stretch at 1 to 18 (MKSVQFCFLFCCWRATCC) is a signal peptide. Cystine bridges form between Cys21/Cys69, Cys35/Cys84, Cys38/Cys122, Cys46/Cys100, Cys50/Cys102, and Cys105/Cys112. Asn25 and Asn42 each carry an N-linked (GlcNAc...) asparagine glycan.

It belongs to the glycoprotein hormones subunit beta family. Heterodimer. The active follitropin is a heterodimer composed of an alpha chain/CGA shared with other hormones and a unique beta chain/FSHB shown here.

It localises to the secreted. In terms of biological role, together with the alpha chain CGA constitutes follitropin, the follicle-stimulating hormone, and provides its biological specificity to the hormone heterodimer. Binds FSHR, a G protein-coupled receptor, on target cells to activate downstream signaling pathways. Follitropin is involved in follicle development and spermatogenesis in reproductive organs. This Cervus nippon (Sika deer) protein is Follitropin subunit beta (FSHB).